The following is a 241-amino-acid chain: Small ribosomal subunit protein uS2 (241 aa).

Belongs to the universal ribosomal protein uS2 family.

The sequence is that of Small ribosomal subunit protein uS2 from Pectobacterium atrosepticum (strain SCRI 1043 / ATCC BAA-672) (Erwinia carotovora subsp. atroseptica).